The following is a 128-amino-acid chain: S-adenosylmethionine decarboxylase proenzyme (128 aa).

The Schiff-base intermediate with substrate; via pyruvic acid role is filled by S63. Residue S63 is modified to Pyruvic acid (Ser); by autocatalysis. Catalysis depends on H68, which acts as the Proton acceptor; for processing activity. The active-site Proton donor; for catalytic activity is the C83.

This sequence belongs to the prokaryotic AdoMetDC family. Type 1 subfamily. Heterotetramer of two alpha and two beta chains arranged as a dimer of alpha/beta heterodimers. Requires pyruvate as cofactor. In terms of processing, is synthesized initially as an inactive proenzyme. Formation of the active enzyme involves a self-maturation process in which the active site pyruvoyl group is generated from an internal serine residue via an autocatalytic post-translational modification. Two non-identical subunits are generated from the proenzyme in this reaction, and the pyruvate is formed at the N-terminus of the alpha chain, which is derived from the carboxyl end of the proenzyme. The post-translation cleavage follows an unusual pathway, termed non-hydrolytic serinolysis, in which the side chain hydroxyl group of the serine supplies its oxygen atom to form the C-terminus of the beta chain, while the remainder of the serine residue undergoes an oxidative deamination to produce ammonia and the pyruvoyl group blocking the N-terminus of the alpha chain.

The catalysed reaction is S-adenosyl-L-methionine + H(+) = S-adenosyl 3-(methylsulfanyl)propylamine + CO2. It participates in amine and polyamine biosynthesis; S-adenosylmethioninamine biosynthesis; S-adenosylmethioninamine from S-adenosyl-L-methionine: step 1/1. Functionally, catalyzes the decarboxylation of S-adenosylmethionine to S-adenosylmethioninamine (dcAdoMet), the propylamine donor required for the synthesis of the polyamines spermine and spermidine from the diamine putrescine. The chain is S-adenosylmethionine decarboxylase proenzyme from Leptospira borgpetersenii serovar Hardjo-bovis (strain JB197).